Consider the following 862-residue polypeptide: Protein kintoun (862 aa).

4 disordered regions span residues 208-229 (KLLP…RTTK), 564-602 (TKRE…KKER), 626-670 (GEGA…STMP), and 743-854 (RREV…QFKS). Residues 564-586 (TKREEHGEPECDEKDGSEAEKAR) are compositionally biased toward basic and acidic residues. Basic residues predominate over residues 587–601 (TLQKAKRNSRKKKKE). 2 stretches are compositionally biased toward basic and acidic residues: residues 748 to 757 (RRADARRMSE) and 766 to 785 (KDAH…HDEK).

This sequence belongs to the PIH1 family. Kintoun subfamily.

Its subcellular location is the cytoplasm. Its function is as follows. Required for cytoplasmic pre-assembly of axonemal dyneins, thereby playing a central role in motility in cilia and flagella. Involved in pre-assembly of dynein arm complexes in the cytoplasm before intraflagellar transport loads them for the ciliary compartment. This chain is Protein kintoun, found in Anopheles gambiae (African malaria mosquito).